The chain runs to 623 residues: Putative disease resistance protein At5g47280 (623 aa).

2 consecutive NB-ARC domains span residues 2 to 51 and 119 to 249; these read LFNL…VSQS and VDPR…NMLV. 16-23 is a binding site for ATP; sequence GMIGSGKT. 4 LRR repeats span residues 488–511, 512–534, 536–558, and 560–581; these read SLNS…SKLQ, ALQL…ICEL, RLVY…IGNV, and TLEK…AVSL.

It belongs to the disease resistance NB-LRR family.

Potential disease resistance protein. The sequence is that of Putative disease resistance protein At5g47280 from Arabidopsis thaliana (Mouse-ear cress).